The chain runs to 239 residues: Ribosomal RNA small subunit methyltransferase G (239 aa).

Residues glycine 77, phenylalanine 82, 128-129 (AE), and arginine 147 each bind S-adenosyl-L-methionine. The interval 215-239 (IRKTKSTPKKYPRKPGTPNKSPIEG) is disordered. The segment covering 216–227 (RKTKSTPKKYPR) has biased composition (basic residues).

Belongs to the methyltransferase superfamily. RNA methyltransferase RsmG family.

It is found in the cytoplasm. In terms of biological role, specifically methylates the N7 position of guanine in position 535 of 16S rRNA. In Bacillus velezensis (strain DSM 23117 / BGSC 10A6 / LMG 26770 / FZB42) (Bacillus amyloliquefaciens subsp. plantarum), this protein is Ribosomal RNA small subunit methyltransferase G.